Consider the following 188-residue polypeptide: Photosystem I assembly protein Ycf4 (188 aa).

2 consecutive transmembrane segments (helical) span residues 26 to 48 (MLWA…SSYF) and 68 to 90 (AALT…VFFL).

The protein belongs to the Ycf4 family.

The protein localises to the cellular thylakoid membrane. Functionally, seems to be required for the assembly of the photosystem I complex. This is Photosystem I assembly protein Ycf4 from Picosynechococcus sp. (strain ATCC 27264 / PCC 7002 / PR-6) (Agmenellum quadruplicatum).